The primary structure comprises 198 residues: Endothelin-3 (198 aa).

The N-terminal stretch at 1 to 16 (MEPGLWLLFGLTVTSA) is a signal peptide. The propeptide occupies 17–86 (AGLVPCPQPG…SKGGPVHGRA (70 aa)). The interval 22–79 (CPQPGDAGKSGVPGTPPTARSEGDIQEPVAMTAVQGPSPRSPEQEQELGRFGEQASKG) is disordered. Cystine bridges form between Cys-89–Cys-103 and Cys-91–Cys-99. A propeptide spanning residues 110–198 (INTPEQTVPY…RGNGGLRPTR (89 aa)) is cleaved from the precursor. The endothelin-like stretch occupies residues 150–164 (CACVQSQDSACLHFC). The disordered stretch occupies residues 174-198 (SRTATNPDKEEEPASRGNGGLRPTR).

Belongs to the endothelin/sarafotoxin family. Expressed in which included heart, lung, liver, kidney, spleen, stomach, pancreas, duodenum, colon, uterus, ovary and testis.

It localises to the secreted. Endothelins are endothelium-derived vasoconstrictor peptides. The protein is Endothelin-3 (EDN3) of Canis lupus familiaris (Dog).